Reading from the N-terminus, the 259-residue chain is Putative hydro-lyase Bphyt_4813 (259 aa).

This sequence belongs to the D-glutamate cyclase family.

The sequence is that of Putative hydro-lyase Bphyt_4813 from Paraburkholderia phytofirmans (strain DSM 17436 / LMG 22146 / PsJN) (Burkholderia phytofirmans).